Here is a 1001-residue protein sequence, read N- to C-terminus: Serine/threonine-protein kinase TAO1-A (1001 aa).

The region spanning 28 to 281 (FSDLREIGHG…SDELLKNMFV (254 aa)) is the Protein kinase domain. ATP-binding positions include 34-42 (IGHGSFGAV) and Lys57. The Proton acceptor role is filled by Asp151. 2 disordered regions span residues 324-431 (PAVE…HKSH) and 567-586 (KEEL…EWLS). Positions 350–370 (SNQSIPSMSISASSQSSSVTS) are enriched in low complexity. Basic and acidic residues-rich tracts occupy residues 375 to 388 (SDDK…EGDH) and 577 to 586 (PKKEKQEWLS). 2 coiled-coil regions span residues 458-651 (SELR…EHAM) and 754-877 (KAVL…EIEA). The disordered stretch occupies residues 911 to 1001 (SHNPTGGPGP…ISNGSRMSYT (91 aa)). The span at 921-930 (HWGHPMAGPP) shows a compositional bias: low complexity. Composition is skewed to polar residues over residues 949–967 (GSVQ…NSPQ) and 974–1001 (SGGQ…MSYT).

Belongs to the protein kinase superfamily. STE Ser/Thr protein kinase family. STE20 subfamily.

Its subcellular location is the cytoplasm. It carries out the reaction L-seryl-[protein] + ATP = O-phospho-L-seryl-[protein] + ADP + H(+). It catalyses the reaction L-threonyl-[protein] + ATP = O-phospho-L-threonyl-[protein] + ADP + H(+). In terms of biological role, serine/threonine-protein kinase involved in various processes such as p38/mapk14 stress-activated MAPK cascade, DNA damage response and regulation of cytoskeleton stability. Acts as an activator of the p38/MAPK14 stress-activated MAPK cascade by mediating phosphorylation and subsequent activation of upstream MAP kinase kinases. In response to DNA damage, involved in the G2/M transition DNA damage checkpoint by activating the p38/MAPK14 stress-activated MAPK cascade. This chain is Serine/threonine-protein kinase TAO1-A (taok1-a), found in Xenopus laevis (African clawed frog).